A 695-amino-acid chain; its full sequence is Elongation factor G (695 aa).

Positions 10–285 constitute a tr-type G domain; sequence AKTRNIGIMA…AVIDYLPSPI (276 aa). GTP contacts are provided by residues 19 to 26, 83 to 87, and 137 to 140; these read AHIDAGKT, DTPGH, and NKMD.

Belongs to the TRAFAC class translation factor GTPase superfamily. Classic translation factor GTPase family. EF-G/EF-2 subfamily.

The protein localises to the cytoplasm. In terms of biological role, catalyzes the GTP-dependent ribosomal translocation step during translation elongation. During this step, the ribosome changes from the pre-translocational (PRE) to the post-translocational (POST) state as the newly formed A-site-bound peptidyl-tRNA and P-site-bound deacylated tRNA move to the P and E sites, respectively. Catalyzes the coordinated movement of the two tRNA molecules, the mRNA and conformational changes in the ribosome. This is Elongation factor G from Limosilactobacillus reuteri (strain DSM 20016) (Lactobacillus reuteri).